Reading from the N-terminus, the 131-residue chain is ATP synthase epsilon chain (131 aa).

It belongs to the ATPase epsilon chain family. As to quaternary structure, F-type ATPases have 2 components, CF(1) - the catalytic core - and CF(0) - the membrane proton channel. CF(1) has five subunits: alpha(3), beta(3), gamma(1), delta(1), epsilon(1). CF(0) has three main subunits: a, b and c.

The protein localises to the cell membrane. Produces ATP from ADP in the presence of a proton gradient across the membrane. This Bacillus licheniformis (strain ATCC 14580 / DSM 13 / JCM 2505 / CCUG 7422 / NBRC 12200 / NCIMB 9375 / NCTC 10341 / NRRL NRS-1264 / Gibson 46) protein is ATP synthase epsilon chain.